The sequence spans 509 residues: Probable triacylglyceride transporter ML0556 (509 aa).

13 consecutive transmembrane segments (helical) span residues 48-68 (RITW…PLLS), 78-98 (LLLQ…ALAG), 112-132 (IQGV…ADLW), 146-166 (AAQE…VWLF), 171-191 (YVFW…QVSL), 203-223 (VDVV…IGLY), 232-252 (VLPS…VAFA), 272-292 (PFLS…VTLV), 309-329 (AAGL…LGGW), 339-359 (MTFV…HWPV), 381-403 (LLVA…LRVV), 410-430 (IASA…VAAL), and 477-497 (IFMI…LISS).

It belongs to the major facilitator superfamily.

The protein localises to the cell inner membrane. In association with lipoprotein LprG probably transports triacylglycerides (TAG) across the inner cell membrane into the periplasm; TAG probably regulates lipid metabolism and growth regulation. May be an efflux transporter and involved in maintaining correct cell wall permeability. Probably required with LprG for normal surface localization of lipoarabinomannan (LAM). This chain is Probable triacylglyceride transporter ML0556, found in Mycobacterium leprae (strain TN).